Here is a 174-residue protein sequence, read N- to C-terminus: uncharacterized protein (174 aa).

Belongs to the NAD(P)H dehydrogenase (quinone) family.

This is an uncharacterized protein from Bacillus subtilis (strain 168).